The following is a 200-amino-acid chain: LHFPL tetraspan subfamily member 6 protein (200 aa).

A signal peptide spans 1-21; sequence MASSLTCTGVIWALLSFLCAA. Helical transmembrane passes span 84-104, 123-143, and 166-186; these read ICTI…LTAL, GIQF…PLGW, and IGWA…LCTW.

The protein belongs to the LHFP family. As to expression, pancreas, kidney, skeletal muscle, liver, lung brain, heart, colon, small intestine, uterus, testis, prostate, thymus, spleen and placenta.

The protein localises to the membrane. This Homo sapiens (Human) protein is LHFPL tetraspan subfamily member 6 protein.